The chain runs to 102 residues: Small ribosomal subunit protein uS10 (102 aa).

Belongs to the universal ribosomal protein uS10 family. In terms of assembly, part of the 30S ribosomal subunit.

In terms of biological role, involved in the binding of tRNA to the ribosomes. In Enterococcus faecalis (strain ATCC 700802 / V583), this protein is Small ribosomal subunit protein uS10.